The following is a 125-amino-acid chain: Large ribosomal subunit protein bL12 (125 aa).

The protein belongs to the bacterial ribosomal protein bL12 family. Homodimer. Part of the ribosomal stalk of the 50S ribosomal subunit. Forms a multimeric L10(L12)X complex, where L10 forms an elongated spine to which 2 to 4 L12 dimers bind in a sequential fashion. Binds GTP-bound translation factors.

Forms part of the ribosomal stalk which helps the ribosome interact with GTP-bound translation factors. Is thus essential for accurate translation. In Cereibacter sphaeroides (Rhodobacter sphaeroides), this protein is Large ribosomal subunit protein bL12.